A 371-amino-acid polypeptide reads, in one-letter code: Dihydroorotate dehydrogenase (quinone) (371 aa).

FMN is bound by residues 79-83 (AGFDK) and threonine 103. Residue lysine 83 coordinates substrate. 128–132 (NRMGF) contributes to the substrate binding site. Asparagine 156 and asparagine 189 together coordinate FMN. A substrate-binding site is contributed by asparagine 189. The Nucleophile role is filled by serine 192. Asparagine 194 contributes to the substrate binding site. FMN is bound by residues lysine 225 and threonine 253. A substrate-binding site is contributed by 254-255 (NT). FMN contacts are provided by residues glycine 279, glycine 308, and 329 to 330 (YT).

This sequence belongs to the dihydroorotate dehydrogenase family. Type 2 subfamily. As to quaternary structure, monomer. FMN is required as a cofactor.

The protein resides in the cell membrane. It catalyses the reaction (S)-dihydroorotate + a quinone = orotate + a quinol. It functions in the pathway pyrimidine metabolism; UMP biosynthesis via de novo pathway; orotate from (S)-dihydroorotate (quinone route): step 1/1. Catalyzes the conversion of dihydroorotate to orotate with quinone as electron acceptor. This chain is Dihydroorotate dehydrogenase (quinone), found in Corynebacterium glutamicum (strain R).